The sequence spans 368 residues: Phosphoserine aminotransferase (368 aa).

Residue Arg-44 coordinates L-glutamate. Pyridoxal 5'-phosphate contacts are provided by residues 78-79, Trp-104, Thr-157, Asp-179, and Gln-202; that span reads AT. Lys-203 bears the N6-(pyridoxal phosphate)lysine mark. Position 244-245 (244-245) interacts with pyridoxal 5'-phosphate; sequence NT.

This sequence belongs to the class-V pyridoxal-phosphate-dependent aminotransferase family. SerC subfamily. In terms of assembly, homodimer. Requires pyridoxal 5'-phosphate as cofactor.

The protein resides in the cytoplasm. The catalysed reaction is O-phospho-L-serine + 2-oxoglutarate = 3-phosphooxypyruvate + L-glutamate. It catalyses the reaction 4-(phosphooxy)-L-threonine + 2-oxoglutarate = (R)-3-hydroxy-2-oxo-4-phosphooxybutanoate + L-glutamate. It participates in amino-acid biosynthesis; L-serine biosynthesis; L-serine from 3-phospho-D-glycerate: step 2/3. Its pathway is cofactor biosynthesis; pyridoxine 5'-phosphate biosynthesis; pyridoxine 5'-phosphate from D-erythrose 4-phosphate: step 3/5. Functionally, catalyzes the reversible conversion of 3-phosphohydroxypyruvate to phosphoserine and of 3-hydroxy-2-oxo-4-phosphonooxybutanoate to phosphohydroxythreonine. The polypeptide is Phosphoserine aminotransferase (Neisseria meningitidis serogroup A / serotype 4A (strain DSM 15465 / Z2491)).